The sequence spans 177 residues: Eggshell protein (177 aa).

Positions 1–18 (MKQSLTLVFLVAIGYATA) are cleaved as a signal peptide. 5 consecutive repeat copies span residues 25 to 41 (YSGGYGGGCYGSDCDSG), 42 to 59 (YGDSGYGGGCTGGDCGGG), 60 to 75 (YGGGYGGGCSGGDCGN), 76 to 91 (YGGGYGGDCNGGDCGN), and 92 to 112 (YGGGYGGGNGGGCSGGNCGGG). Residues 25 to 112 (YSGGYGGGCY…GCSGGNCGGG (88 aa)) are 5 X approximate tandem repeats. The span at 149-166 (GSGKGKGGGKGGKGGKGG) shows a compositional bias: gly residues. The interval 149–177 (GSGKGKGGGKGGKGGKGGTYKPSHYGGGY) is disordered.

In Schistosoma mansoni (Blood fluke), this protein is Eggshell protein.